The primary structure comprises 247 residues: UPF0280 protein MmarC6_1437 (247 aa).

Belongs to the UPF0280 family.

The protein is UPF0280 protein MmarC6_1437 of Methanococcus maripaludis (strain C6 / ATCC BAA-1332).